The chain runs to 222 residues: Ribosomal RNA small subunit methyltransferase G (222 aa).

S-adenosyl-L-methionine contacts are provided by residues G85, L90, 108–110 (DAT), 136–137 (VE), and R150.

Belongs to the methyltransferase superfamily. RNA methyltransferase RsmG family.

It is found in the cytoplasm. Specifically methylates the N7 position of a guanine in 16S rRNA. In Chlorobium phaeobacteroides (strain DSM 266 / SMG 266 / 2430), this protein is Ribosomal RNA small subunit methyltransferase G.